We begin with the raw amino-acid sequence, 32 residues long: MASEIFGIAVVFWVLIPVGLAGGALLLKLQGD.

The chain crosses the membrane as a helical span at residues 9–27 (AVVFWVLIPVGLAGGALLL).

It belongs to the PetM family. In terms of assembly, the 4 large subunits of the cytochrome b6-f complex are cytochrome b6, subunit IV (17 kDa polypeptide, PetD), cytochrome f and the Rieske protein, while the 4 small subunits are PetG, PetL, PetM and PetN. The complex functions as a dimer.

The protein localises to the cellular thylakoid membrane. Component of the cytochrome b6-f complex, which mediates electron transfer between photosystem II (PSII) and photosystem I (PSI), cyclic electron flow around PSI, and state transitions. The chain is Cytochrome b6-f complex subunit 7 from Synechococcus sp. (strain CC9311).